Here is an 82-residue protein sequence, read N- to C-terminus: U16-lycotoxin-Ls1b (82 aa).

The first 22 residues, 1-22, serve as a signal peptide directing secretion; the sequence is MSPKVQALLLLVGLITFLEVHA. A propeptide spanning residues 23 to 34 is cleaved from the precursor; the sequence is EEELSETVESER. Cystine bridges form between Cys36/Cys51, Cys43/Cys56, Cys50/Cys67, and Cys58/Cys65.

Belongs to the neurotoxin 02 (plectoxin) family. 04 (U16-lycotoxin) subfamily. As to expression, expressed by the venom gland.

The protein resides in the secreted. In Lycosa singoriensis (Wolf spider), this protein is U16-lycotoxin-Ls1b.